Consider the following 454-residue polypeptide: Inner membrane permease YgbN (454 aa).

A topological domain (periplasmic) is located at residue methionine 1. Residues serine 2–isoleucine 22 traverse the membrane as a helical segment. The Cytoplasmic portion of the chain corresponds to lysine 23–glutamine 27. Residues proline 28–glycine 48 form a helical membrane-spanning segment. The Periplasmic portion of the chain corresponds to glutamate 49–lysine 52. Residues valine 53–alanine 73 traverse the membrane as a helical segment. Topologically, residues methionine 74 to alanine 108 are cytoplasmic. A helical membrane pass occupies residues alanine 109 to isoleucine 129. The Periplasmic portion of the chain corresponds to tyrosine 130–lysine 137. The helical transmembrane segment at isoleucine 138–valine 158 threads the bilayer. The Cytoplasmic portion of the chain corresponds to proline 159–aspartate 174. Residues isoleucine 175–phenylalanine 195 form a helical membrane-spanning segment. The Periplasmic segment spans residues alanine 196–proline 235. Residues glycine 236 to valine 256 traverse the membrane as a helical segment. Residues serine 257 to leucine 273 are Cytoplasmic-facing. The helical transmembrane segment at isoleucine 274 to leucine 294 threads the bilayer. At arginine 295–aspartate 305 the chain is on the periplasmic side. A helical transmembrane segment spans residues isoleucine 306–valine 326. Residues phenylalanine 327–alanine 341 are Cytoplasmic-facing. Residues asparagine 342–leucine 362 traverse the membrane as a helical segment. Topologically, residues arginine 363–alanine 383 are periplasmic. Residues valine 384–leucine 404 form a helical membrane-spanning segment. The Cytoplasmic segment spans residues glycine 405–threonine 433. The chain crosses the membrane as a helical span at residues valine 434–isoleucine 454.

This sequence belongs to the GntP permease family.

It is found in the cell inner membrane. The sequence is that of Inner membrane permease YgbN (ygbN) from Escherichia coli (strain K12).